Consider the following 423-residue polypeptide: UDP-N-acetylglucosamine 1-carboxyvinyltransferase (423 aa).

22-23 (KN) provides a ligand contact to phosphoenolpyruvate. UDP-N-acetyl-alpha-D-glucosamine is bound at residue arginine 98. Cysteine 122 (proton donor) is an active-site residue. Cysteine 122 carries the post-translational modification 2-(S-cysteinyl)pyruvic acid O-phosphothioketal. UDP-N-acetyl-alpha-D-glucosamine contacts are provided by residues 127–131 (RPVDQ), aspartate 311, and isoleucine 333.

Belongs to the EPSP synthase family. MurA subfamily.

The protein localises to the cytoplasm. It carries out the reaction phosphoenolpyruvate + UDP-N-acetyl-alpha-D-glucosamine = UDP-N-acetyl-3-O-(1-carboxyvinyl)-alpha-D-glucosamine + phosphate. Its pathway is cell wall biogenesis; peptidoglycan biosynthesis. Its function is as follows. Cell wall formation. Adds enolpyruvyl to UDP-N-acetylglucosamine. The sequence is that of UDP-N-acetylglucosamine 1-carboxyvinyltransferase from Stenotrophomonas maltophilia (strain R551-3).